We begin with the raw amino-acid sequence, 190 residues long: MSLFEDLINSKIRELEELKSNLLIDIETRIRKEATAVLNKYSTQITNIESEVALERERILYSAIIEARRKIVETYEQILNDFIETIYNEVDKLRGSERYVKFLRFLIESAINYTQTKDVIIYASPKDRGVVETLAKNLGITGFVIEKDIKGGVIVMTRDGSITVDYSLETLLSNKLEELKHLIYLETHER.

The protein belongs to the V-ATPase E subunit family. In terms of assembly, has multiple subunits with at least A(3), B(3), C, D, E, F, H, I and proteolipid K(x).

It localises to the cell membrane. Component of the A-type ATP synthase that produces ATP from ADP in the presence of a proton gradient across the membrane. This is A-type ATP synthase subunit E from Pyrobaculum islandicum (strain DSM 4184 / JCM 9189 / GEO3).